Reading from the N-terminus, the 657-residue chain is Archaeal Lon protease (657 aa).

Over 1 to 123 the chain is Cytoplasmic; sequence MEENIESVEE…KAEREKRDRS (123 aa). 57–64 is an ATP binding site; that stretch reads GEPGTGKS. A helical transmembrane segment spans residues 124 to 144; that stretch reads RSIMFVIFSVVLLGIIAAIVL. Position 145 (Arg145) is a topological domain, extracellular. A helical transmembrane segment spans residues 146-166; that stretch reads SITLIFFAIMAAAFLYMAMAF. Topologically, residues 167–657 are cytoplasmic; the sequence is NPVIRNERAM…ATTRAGNNAA (491 aa). Residues 433–618 enclose the Lon proteolytic domain; it reads GSVVGMVNGL…EDVLRVALVN (186 aa). Residues Ser525 and Lys568 contribute to the active site.

The protein belongs to the peptidase S16 family. Archaeal LonB subfamily. As to quaternary structure, homohexamer. Organized in a ring with a central cavity.

It is found in the cell membrane. In terms of biological role, ATP-dependent serine protease that mediates the selective degradation of mutant and abnormal proteins as well as certain short-lived regulatory proteins. Degrades polypeptides processively. This Thermoplasma acidophilum (strain ATCC 25905 / DSM 1728 / JCM 9062 / NBRC 15155 / AMRC-C165) protein is Archaeal Lon protease.